A 439-amino-acid chain; its full sequence is 23S rRNA (uracil(1939)-C(5))-methyltransferase RlmD (439 aa).

The 59-residue stretch at 5-63 (RKLEHKTYKLNIESFSHEGRGIAHFEDKIIFVSDALPGELVIANRTFSCAKFEEADAKE) folds into the TRAM domain. Cys-76, Cys-82, Cys-85, and Cys-164 together coordinate [4Fe-4S] cluster. Residues Gln-271, Phe-300, Asn-305, Glu-321, Asp-348, and Asp-370 each contribute to the S-adenosyl-L-methionine site. Cys-396 acts as the Nucleophile in catalysis.

Belongs to the class I-like SAM-binding methyltransferase superfamily. RNA M5U methyltransferase family. RlmD subfamily.

It catalyses the reaction uridine(1939) in 23S rRNA + S-adenosyl-L-methionine = 5-methyluridine(1939) in 23S rRNA + S-adenosyl-L-homocysteine + H(+). Its function is as follows. Catalyzes the formation of 5-methyl-uridine at position 1939 (m5U1939) in 23S rRNA. This Vesicomyosocius okutanii subsp. Calyptogena okutanii (strain HA) protein is 23S rRNA (uracil(1939)-C(5))-methyltransferase RlmD.